The sequence spans 512 residues: D-alanine--D-alanyl carrier protein ligase (512 aa).

An ATP-binding site is contributed by 152-153 (TS). Residue D199 participates in D-alanine binding. Position 294–299 (294–299 (NAYGPT)) interacts with ATP. A D-alanine-binding site is contributed by V303. ATP contacts are provided by residues D385, 397–400 (YGGR), and K499. K499 contributes to the D-alanine binding site.

This sequence belongs to the ATP-dependent AMP-binding enzyme family. DltA subfamily.

The protein localises to the cytoplasm. The enzyme catalyses holo-[D-alanyl-carrier protein] + D-alanine + ATP = D-alanyl-[D-alanyl-carrier protein] + AMP + diphosphate. It participates in cell wall biogenesis; lipoteichoic acid biosynthesis. In terms of biological role, catalyzes the first step in the D-alanylation of lipoteichoic acid (LTA), the activation of D-alanine and its transfer onto the D-alanyl carrier protein (Dcp) DltC. In an ATP-dependent two-step reaction, forms a high energy D-alanyl-AMP intermediate, followed by transfer of the D-alanyl residue as a thiol ester to the phosphopantheinyl prosthetic group of the Dcp. D-alanylation of LTA plays an important role in modulating the properties of the cell wall in Gram-positive bacteria, influencing the net charge of the cell wall. This is D-alanine--D-alanyl carrier protein ligase from Streptococcus equi subsp. equi (strain 4047).